A 308-amino-acid polypeptide reads, in one-letter code: Transaldolase (308 aa).

Lysine 125 (schiff-base intermediate with substrate) is an active-site residue.

The protein belongs to the transaldolase family. Type 1 subfamily. In terms of assembly, homodimer.

The protein localises to the cytoplasm. The enzyme catalyses D-sedoheptulose 7-phosphate + D-glyceraldehyde 3-phosphate = D-erythrose 4-phosphate + beta-D-fructose 6-phosphate. It participates in carbohydrate degradation; pentose phosphate pathway; D-glyceraldehyde 3-phosphate and beta-D-fructose 6-phosphate from D-ribose 5-phosphate and D-xylulose 5-phosphate (non-oxidative stage): step 2/3. Its function is as follows. Transaldolase is important for the balance of metabolites in the pentose-phosphate pathway. The chain is Transaldolase from Pseudomonas fluorescens (strain Pf0-1).